A 457-amino-acid polypeptide reads, in one-letter code: Transcription factor E2F3 (457 aa).

Positions 80 to 171 (LLPSVPGTEP…PKSPSEKTRY (92 aa)) are disordered. The span at 93–102 (SLYTTPQGPS) shows a compositional bias: polar residues. Positions 96–145 (TTPQGPSSRVGLLQQPPAPGRGGGGGPPAKRRLELGESGHQYLSDGLKTP) are cyclin A/CDK2 binding. The DNA-binding element occupies 147-237 (GKGRAALRSP…KNNVQWMGCS (91 aa)). Low complexity predominate over residues 155-164 (SPDSPKTPKS). A leucine-zipper region spans residues 196 to 217 (LNKAAEVLKVQKRRIYDITNVL). Positions 201–237 (EVLKVQKRRIYDITNVLEGIHLIKKKSKNNVQWMGCS) match the DEF box motif. The dimerization stretch occupies residues 238–329 (LSEDGGMLAQ…VPDSIESLQI (92 aa)). The interval 350–387 (HRPMKTNNQDHNGNIPKPTSKDLASNNSGHSDCSVSTA) is disordered. Residues 371–387 (DLASNNSGHSDCSVSTA) are compositionally biased toward polar residues. A transactivation region spans residues 383 to 457 (SVSTANLSPL…LPLVEDFMCS (75 aa)). The retinoblastoma protein binding stretch occupies residues 424–441 (EDYLLSLGEEEGISDLFD).

Belongs to the E2F/DP family. As to quaternary structure, component of the DRTF1/E2F transcription factor complex. Binds cooperatively with TFDP1/Dp-1 to E2F sites. Interacts with retinoblastoma protein RB1 and related proteins (such as RBL1) that inhibit the E2F transactivation domain. Binds EAPP.

It localises to the nucleus. Functionally, transcription activator that binds DNA cooperatively with DP proteins through the E2 recognition site, 5'-TTTC[CG]CGC-3' found in the promoter region of a number of genes whose products are involved in cell cycle regulation or in DNA replication. The DRTF1/E2F complex functions in the control of cell-cycle progression from G1 to S phase. E2F3 binds specifically to RB1 in a cell-cycle dependent manner. Inhibits adipogenesis, probably through the repression of CEBPA binding to its target gene promoters. In Mus musculus (Mouse), this protein is Transcription factor E2F3 (E2f3).